Here is a 534-residue protein sequence, read N- to C-terminus: Acetyltransferase MATC1 (534 aa).

Residues His-186 and Asp-459 each act as proton acceptor in the active site.

This sequence belongs to the plant acyltransferase family.

Its subcellular location is the cell membrane. The protein operates within secondary metabolite biosynthesis. Functionally, acetyltransferase; part of the gene cluster that mediates the biosynthesis of mannosylerythritol lipids (MELs), surface-active substances that enhance the availability of water-insoluble substrates. Mannosylerythritol lipid production is responsible for hemolytic activity of Ustilago maydis. Depending on the number of acetyl groups, mannosylerythritol lipids can be differentiated into MEL A (fully acetylated), MEL B and MEL C (monoacetylated at R-6 and R-4, respectively), and the fully deacetylated MEL D. The first step in the pathway is the generation of mannosylerythritol by the glycosyltransferase EMT1 which catalyzes the transfer of GDP-mannose to the C-4 atom of meso-erythritol. This reaction has to be stereospecific, since only mannosyl-D-erythritol is generated. The produced disaccharide is subsequently acylated with fatty acids of various lengths derived from the peroxisomal beta-oxidation by the peroxisomal acyltransferases MAC1 and MAC2 at positions C-2 and C-3, repectively. The existence of MEL derivatives which carry an acetyl group at C-2 implies that at least MAC1 also accepts acetyl-CoA as a donor. The final step of MEL biosynthesis is the acetylation of the fully acylated mannosylerythritol lipids catalyzed by the acetyl-CoA-dependent acetyltransferase MAT1. MAT1 displays a relaxed regioselectivity and is able to transfer acetylgroups to both positions C-4 and C-6 of the mannosyl moiety. This chain is Acetyltransferase MATC1, found in Mycosarcoma maydis (Corn smut fungus).